Consider the following 178-residue polypeptide: ATP synthase subunit delta (178 aa).

This sequence belongs to the ATPase delta chain family. As to quaternary structure, F-type ATPases have 2 components, F(1) - the catalytic core - and F(0) - the membrane proton channel. F(1) has five subunits: alpha(3), beta(3), gamma(1), delta(1), epsilon(1). F(0) has three main subunits: a(1), b(2) and c(10-14). The alpha and beta chains form an alternating ring which encloses part of the gamma chain. F(1) is attached to F(0) by a central stalk formed by the gamma and epsilon chains, while a peripheral stalk is formed by the delta and b chains.

The protein localises to the cell membrane. Its function is as follows. F(1)F(0) ATP synthase produces ATP from ADP in the presence of a proton or sodium gradient. F-type ATPases consist of two structural domains, F(1) containing the extramembraneous catalytic core and F(0) containing the membrane proton channel, linked together by a central stalk and a peripheral stalk. During catalysis, ATP synthesis in the catalytic domain of F(1) is coupled via a rotary mechanism of the central stalk subunits to proton translocation. Functionally, this protein is part of the stalk that links CF(0) to CF(1). It either transmits conformational changes from CF(0) to CF(1) or is implicated in proton conduction. The protein is ATP synthase subunit delta of Streptococcus pyogenes serotype M3 (strain SSI-1).